The primary structure comprises 286 residues: MLLEGIETLLVLSKEKTMSRTGSQLYISQSAVSKRIANLEKKLGKKLIVPAGRHIKLTADAEQLIASIGPTFNELHGLIFEQQTLEDNTLLRMDCSETLVAGYLGQTMGQHRKQDPHWVITTNHTPRIVENVQSGKATLGFCAGYLPANHGLLTFHLGDEPFTVISQAPLHALPSELITNDLANPANTYQAAMLHKQGIRPAMEMDSYTAAAQLALGGMLPALVPRSIVSTLKIEPQHCFDFAELADLTRPIHICLRASRYRSSRVQALITALHDAVPKAVLAPSA.

In terms of domain architecture, HTH lysR-type spans M1 to T58. Residues M18–A37 constitute a DNA-binding region (H-T-H motif).

It belongs to the LysR transcriptional regulatory family.

This is an uncharacterized protein from Vibrio cholerae serotype O1 (strain ATCC 39315 / El Tor Inaba N16961).